A 194-amino-acid chain; its full sequence is Histone H1.0 (194 aa).

The residue at position 1 (Met-1) is an N-acetylmethionine. Positions 1 to 26 are disordered; that stretch reads MTENSTSTPAAKPKRAKAAKKSTDHP. Residue Thr-2 is modified to N-acetylthreonine; in Histone H1.0, N-terminally processed. Residues 24-97 form the H15 domain; sequence DHPKYSDMIV…GASGSFRLAK (74 aa). Residue Arg-42 is modified to Citrulline. The segment at 86-194 is disordered; that stretch reads GVGASGSFRL…SSAKRASKKK (109 aa). At Ser-104 the chain carries ADP-ribosylserine. The span at 105–194 shows a compositional bias: basic residues; sequence VAFKKTKKEV…SSAKRASKKK (90 aa).

The protein belongs to the histone H1/H5 family. In terms of processing, ADP-ribosylated on Ser-104 in response to DNA damage.

It localises to the nucleus. The protein resides in the chromosome. Histones H1 are necessary for the condensation of nucleosome chains into higher-order structures. The histones H1.0 are found in cells that are in terminal stages of differentiation or that have low rates of cell division. This is Histone H1.0 (H1-0) from Rattus norvegicus (Rat).